A 233-amino-acid polypeptide reads, in one-letter code: 28 kDa ribonucleoprotein, chloroplastic (233 aa).

Residues 1-16 (CVAQTSEWEQEGSTNA) show a composition bias toward polar residues. Residues 1-52 (CVAQTSEWEQEGSTNAVLEGESDPEGAVSWGSETQVSDEGGVEGGQGFSEPP) are disordered. RRM domains follow at residues 55–133 (AKLF…KAAP) and 149–227 (CRVY…VAEE).

It localises to the plastid. The protein resides in the chloroplast. In terms of biological role, probably involved in the 3'-end processing of chloroplast mRNA's. The sequence is that of 28 kDa ribonucleoprotein, chloroplastic from Spinacia oleracea (Spinach).